Consider the following 259-residue polypeptide: Polycomb group RING finger protein 1 (259 aa).

Residues 45-84 (CYLCAGYFIDATTITECLHTFCKSCIVKYLQTSKYCPLCN) form an RING-type zinc finger.

In terms of assembly, component of a PRC1-like complex.

It localises to the nucleus. Functionally, component of a Polycomb group (PcG) multiprotein PRC1-like complex, a complex class required to maintain the transcriptionally repressive state of many genes, including Hox genes, throughout development. PcG PRC1 complex acts via chromatin remodeling and modification of histones; it mediates monoubiquitination of histone H2A 'Lys-119', rendering chromatin heritably changed in its expressibility. The chain is Polycomb group RING finger protein 1 (pcgf1) from Xenopus tropicalis (Western clawed frog).